A 153-amino-acid chain; its full sequence is Aspartate carbamoyltransferase regulatory chain (153 aa).

Residues Cys-109, Cys-114, Cys-138, and Cys-141 each contribute to the Zn(2+) site.

The protein belongs to the PyrI family. In terms of assembly, contains catalytic and regulatory chains. Requires Zn(2+) as cofactor.

Involved in allosteric regulation of aspartate carbamoyltransferase. The polypeptide is Aspartate carbamoyltransferase regulatory chain (Enterobacter sp. (strain 638)).